Reading from the N-terminus, the 295-residue chain is Ornithine carbamoyltransferase, catabolic (295 aa).

Residues 49-52 (STRT), Gln76, Arg100, and 127-130 (HPCQ) each bind carbamoyl phosphate. L-ornithine contacts are provided by residues Asn155, Asp213, and 217 to 218 (SM). Residues 253–254 (CL) and Arg281 each bind carbamoyl phosphate.

The protein belongs to the aspartate/ornithine carbamoyltransferase superfamily. OTCase family. Homohexamer.

The protein localises to the cytoplasm. The enzyme catalyses carbamoyl phosphate + L-ornithine = L-citrulline + phosphate + H(+). The protein operates within amino-acid degradation; L-arginine degradation via ADI pathway; carbamoyl phosphate from L-arginine: step 2/2. Its activity is regulated as follows. Arginine lead to a slight activation. Inhibited by all nucleotide phosphates. In terms of biological role, reversibly catalyzes the transfer of the carbamoyl group from carbamoyl phosphate (CP) to the N(epsilon) atom of ornithine (ORN) to produce L-citrulline. The sequence is that of Ornithine carbamoyltransferase, catabolic (arcB) from Halobacterium salinarum (strain ATCC 700922 / JCM 11081 / NRC-1) (Halobacterium halobium).